The chain runs to 596 residues: Proton channel OTOP3 (596 aa).

Residues 1 to 21 show a composition bias toward low complexity; that stretch reads MGRGARAAAAQSRWGRASRAS. Residues 1 to 59 form a disordered region; that stretch reads MGRGARAAAAQSRWGRASRASVSPGRTIRSAPAVGEAQETEAAPEKENRVDVGAEERAA. Over 1 to 88 the chain is Cytoplasmic; it reads MGRGARAAAA…RDRQAQKAGQ (88 aa). Phosphoserine occurs at positions 21 and 23. Residues 43 to 59 show a composition bias toward basic and acidic residues; it reads APEKENRVDVGAEERAA. Residues 89–109 traverse the membrane as a helical segment; the sequence is LFSGLLALNVVFLGGAFICSM. The Extracellular portion of the chain corresponds to 110 to 119; sequence IFNKVAVTLG. A helical transmembrane segment spans residues 120 to 143; it reads DVWILLATLKVLSLLWLLYYVAST. Residues 144 to 159 lie on the Cytoplasmic side of the membrane; that stretch reads TRRPHAVLYQDPHAGP. Residues 160 to 181 traverse the membrane as a helical segment; sequence LWVRGSLVLFGSCTFCLNIFRV. The Extracellular portion of the chain corresponds to 182-193; that stretch reads GYDVSHIRCKSQ. Residues 194–217 traverse the membrane as a helical segment; sequence LDLVFSVIEMVFIGVQTWVLWKHC. At 218–225 the chain is on the cytoplasmic side; the sequence is KDCVRVQT. The chain crosses the membrane as a helical span at residues 226 to 248; that stretch reads NFTRCGLMLTLATNLLLWVLAVT. Over 249-295 the chain is Extracellular; that stretch reads NDSMHREIEAELGILMEKSTGNETNTCLCLNATACEAFRRGFLMLYP. The helical transmembrane segment at 296–312 threads the bilayer; that stretch reads FSTEYCLICCAVLFVMW. Topologically, residues 313-338 are cytoplasmic; the sequence is KNVGRHVAPHMGAHPATAPFHLHGAI. The helical transmembrane segment at 339–358 threads the bilayer; sequence FGPLLGLLVLLAGVCVFVLF. Topologically, residues 359–372 are extracellular; it reads QIEASGPAIACQYF. A helical membrane pass occupies residues 373–395; the sequence is TLYYAFYVAVLPTMSLACLAGTA. Residues 396 to 413 are Cytoplasmic-facing; it reads IHGLEERELDTVKNPTRS. Residues 414-435 traverse the membrane as a helical segment; that stretch reads LDVVLLMGAALGQMGIAYFSIV. Residues 436-446 are Extracellular-facing; the sequence is AIVAKRPHELL. Residues 447–469 traverse the membrane as a helical segment; sequence NRLILAYSLLLILQHIAQNLFII. The Cytoplasmic segment spans residues 470–529; it reads EGLHRRPLWETVPEGLAGKQEAEPPRRGSLLELGQGLQRASLAYIHSYSHLNWKRRALKE. Residues 530 to 547 form a helical membrane-spanning segment; that stretch reads ISLFLILCNITLWMMPAF. Topologically, residues 548-566 are extracellular; that stretch reads GIHPEFENGLEKDFYGYQI. The helical transmembrane segment at 567 to 589 threads the bilayer; the sequence is WFAIVNFGLPLGVFYRMHSVGGL. At 590–596 the chain is on the cytoplasmic side; it reads VEVYLGA.

The protein belongs to the otopetrin family. As to quaternary structure, homodimer.

The protein resides in the cell membrane. It catalyses the reaction H(+)(in) = H(+)(out). Activated by extracellular acidification. Activated by Zn(2+) under non-acidic conditions. In terms of biological role, proton-selective channel gated by extracellular protons. In Homo sapiens (Human), this protein is Proton channel OTOP3.